A 198-amino-acid polypeptide reads, in one-letter code: Small ribosomal subunit protein eS1 (198 aa).

This sequence belongs to the eukaryotic ribosomal protein eS1 family.

The sequence is that of Small ribosomal subunit protein eS1 from Methanosphaerula palustris (strain ATCC BAA-1556 / DSM 19958 / E1-9c).